The following is a 198-amino-acid chain: Ribonuclease HII (198 aa).

Positions H10–S198 constitute an RNase H type-2 domain. Residues D16, E17, and D108 each contribute to the a divalent metal cation site.

This sequence belongs to the RNase HII family. Requires Mn(2+) as cofactor. Mg(2+) is required as a cofactor.

The protein resides in the cytoplasm. The catalysed reaction is Endonucleolytic cleavage to 5'-phosphomonoester.. Functionally, endonuclease that specifically degrades the RNA of RNA-DNA hybrids. The polypeptide is Ribonuclease HII (Cronobacter sakazakii (strain ATCC BAA-894) (Enterobacter sakazakii)).